Consider the following 335-residue polypeptide: Aspartate--ammonia ligase (335 aa).

The protein belongs to the class-II aminoacyl-tRNA synthetase family. AsnA subfamily.

It localises to the cytoplasm. It catalyses the reaction L-aspartate + NH4(+) + ATP = L-asparagine + AMP + diphosphate + H(+). It functions in the pathway amino-acid biosynthesis; L-asparagine biosynthesis; L-asparagine from L-aspartate (ammonia route): step 1/1. The chain is Aspartate--ammonia ligase from Levilactobacillus brevis (strain ATCC 367 / BCRC 12310 / CIP 105137 / JCM 1170 / LMG 11437 / NCIMB 947 / NCTC 947) (Lactobacillus brevis).